Reading from the N-terminus, the 307-residue chain is Ventral anterior homeobox 2 (307 aa).

Disordered regions lie at residues 1 to 70 (MFDQ…DKLL), 155 to 175 (RTKQ…STSE), and 197 to 254 (PPPN…PSPR). Over residues 25–38 (CRDRGRESKSRTEV) the composition is skewed to basic and acidic residues. A compositionally biased stretch (low complexity) spans 46-62 (SSTDTPGTSASTPTSSS). A DNA-binding region (homeobox) is located at residues 103 to 162 (PKRTRTSFTAEQLYRLELEFQRCQYVVGRERTELARQLNLSETQVKVWFQNRRTKQKKDQ). Positions 159 to 170 (KKDQTKDTDKRS) are enriched in basic and acidic residues. The span at 202 to 249 (LLAHPHPGNGSLLGSPSVSTSSGVSSSTTPPGAGSGTFGLSLSSLSGT) shows a compositional bias: low complexity.

It belongs to the EMX homeobox family. In terms of tissue distribution, expressed in the anterior neural keel and later in the preoptic area, optic stalk and ventral retina.

It is found in the nucleus. Functionally, transcription factor that may function in dorsoventral specification of the forebrain. Required for closure of the choroid fissure and together with vax1 is required for optic nerve differentiation and to limit retinal development to the optic cup. The sequence is that of Ventral anterior homeobox 2 (vax2) from Danio rerio (Zebrafish).